The chain runs to 116 residues: Ribosome-binding factor A (116 aa).

It belongs to the RbfA family. In terms of assembly, monomer. Binds 30S ribosomal subunits, but not 50S ribosomal subunits or 70S ribosomes.

Its subcellular location is the cytoplasm. Its function is as follows. One of several proteins that assist in the late maturation steps of the functional core of the 30S ribosomal subunit. Associates with free 30S ribosomal subunits (but not with 30S subunits that are part of 70S ribosomes or polysomes). Required for efficient processing of 16S rRNA. May interact with the 5'-terminal helix region of 16S rRNA. This is Ribosome-binding factor A from Streptococcus pyogenes serotype M28 (strain MGAS6180).